A 384-amino-acid polypeptide reads, in one-letter code: Lipid-A-disaccharide synthase (384 aa).

This sequence belongs to the LpxB family.

It carries out the reaction a lipid X + a UDP-2-N,3-O-bis[(3R)-3-hydroxyacyl]-alpha-D-glucosamine = a lipid A disaccharide + UDP + H(+). Its pathway is bacterial outer membrane biogenesis; LPS lipid A biosynthesis. Its function is as follows. Condensation of UDP-2,3-diacylglucosamine and 2,3-diacylglucosamine-1-phosphate to form lipid A disaccharide, a precursor of lipid A, a phosphorylated glycolipid that anchors the lipopolysaccharide to the outer membrane of the cell. The sequence is that of Lipid-A-disaccharide synthase (lpxB) from Neisseria meningitidis serogroup A / serotype 4A (strain DSM 15465 / Z2491).